The chain runs to 267 residues: Protein COFACTOR ASSEMBLY OF COMPLEX C SUBUNIT B CCB1, chloroplastic (267 aa).

Residues 1-44 (MATKLISPPLSCPWVTSREVIIKGLPRRRREWMVTKRNRVSAVT) constitute a chloroplast transit peptide. The Lumenal portion of the chain corresponds to 45–84 (AMIVEPLSVVSSSAIQIHQWWEQNPNSLLLMTEATGGYSL). The helical transmembrane segment at 85 to 105 (ASYYTSLGLFVISVPGLWSLI) threads the bilayer. At 106–164 (KRSVKSKIVRKTFVVNDVKKEPKQVAGEILSFFTRKNFNITDRGETITFEGKMVPSRGQ) the chain is on the stromal side. A helical transmembrane segment spans residues 165-185 (AALLTFCTCISLASVGLVLTI). Threonine 186 is a topological domain (lumenal). The helical transmembrane segment at 187 to 207 (VPDFGNNWFFIILLSPLAGVY) threads the bilayer. At 208–267 (YWKKASRKEEIKVKMMVGSKGRLDEIVVQGDDVQVEEMRKELQLNEKGMVYVKGLFERSS) the chain is on the stromal side.

The protein resides in the plastid. It is found in the chloroplast thylakoid membrane. In terms of biological role, required for the biogenesis and accumulation of native cytochrome b6 in the thylakoid membrane. Controls the conversion of apocytochrome b6 to holocytochrome b6. Required for covalent binding of the c-type heme to cytochrome b6. The sequence is that of Protein COFACTOR ASSEMBLY OF COMPLEX C SUBUNIT B CCB1, chloroplastic from Arabidopsis thaliana (Mouse-ear cress).